Consider the following 377-residue polypeptide: DNA replication and repair protein RecF (377 aa).

Residue 30–37 participates in ATP binding; that stretch reads GNNGSGKS.

It belongs to the RecF family.

It localises to the cytoplasm. The RecF protein is involved in DNA metabolism; it is required for DNA replication and normal SOS inducibility. RecF binds preferentially to single-stranded, linear DNA. It also seems to bind ATP. The chain is DNA replication and repair protein RecF from Colwellia psychrerythraea (strain 34H / ATCC BAA-681) (Vibrio psychroerythus).